A 605-amino-acid polypeptide reads, in one-letter code: Insulin-like growth factor-binding protein complex acid labile subunit (605 aa).

The N-terminal stretch at 1–27 is a signal peptide; sequence MALRKGGLALALLLLSWVALGPRSLEG. The LRRNT domain occupies 32–74; that stretch reads TPGEAEGPACPAACVCSYDDDADELSVFCSSRNLTRLPDGVPG. 2 cysteine pairs are disulfide-bonded: C41–C47 and C45–C60. N-linked (GlcNAc...) asparagine glycosylation is found at N64, N85, and N96. LRR repeat units follow at residues 75 to 96, 99 to 120, 123 to 144, 147 to 168, 171 to 192, 195 to 216, 219 to 240, 243 to 264, 267 to 288, 291 to 312, 315 to 336, 339 to 360, 363 to 384, 387 to 408, 411 to 432, 435 to 456, 459 to 480, 483 to 504, and 507 to 528; these read GTQA…AFQN, SLGF…ALLG, NLCH…TFAH, ALAS…LFEG, SLWD…AFRG, SLRE…LFSG, ELRE…VFVQ, RLQK…AFLG, ALRW…TFPG, GLRV…TFKD, FLEE…SFEG, QLEV…AFLG, NVAV…VFRG, KLHS…TFTG, GLRR…SLWG, ELLE…LFQG, KLEY…ALGP, RAFW…LLAP, and RLRY…PPGL. N368 carries an N-linked (GlcNAc...) asparagine glycan. A glycan (N-linked (GlcNAc...) asparagine) is linked at N515. An LRRCT domain is found at 536 to 605; that stretch reads NPWDCGCPLK…DLSEAHFAPC (70 aa). Intrachain disulfides connect C540–C583, C542–C605, and C566–C571. The N-linked (GlcNAc...) asparagine glycan is linked to N580.

In terms of assembly, forms a ternary complex with IGF1 and IGFBP3. Plasma.

It localises to the secreted. Its subcellular location is the extracellular space. In terms of biological role, involved in protein-protein interactions that result in protein complexes, receptor-ligand binding or cell adhesion. This Homo sapiens (Human) protein is Insulin-like growth factor-binding protein complex acid labile subunit (IGFALS).